The chain runs to 78 residues: Acyl carrier protein (78 aa).

The region spanning 2–77 is the Carrier domain; sequence SDTAERVKKI…DAVKFIDKAS (76 aa). Ser-37 is subject to O-(pantetheine 4'-phosphoryl)serine.

It belongs to the acyl carrier protein (ACP) family. 4'-phosphopantetheine is transferred from CoA to a specific serine of apo-ACP by AcpS. This modification is essential for activity because fatty acids are bound in thioester linkage to the sulfhydryl of the prosthetic group.

Its subcellular location is the cytoplasm. It functions in the pathway lipid metabolism; fatty acid biosynthesis. Carrier of the growing fatty acid chain in fatty acid biosynthesis. This Brucella abortus (strain S19) protein is Acyl carrier protein.